Here is a 287-residue protein sequence, read N- to C-terminus: Hydroxysteroid 11-beta-dehydrogenase 1-like protein (287 aa).

Residues 1–15 form the signal peptide; that stretch reads MKVLLLTGLGALFFA. NADP(+) is bound by residues 36–62, 87–88, and 114–116; these read GVSA…TAHT, DM, and NHL. A substrate-binding site is contributed by S165. Residue Y178 is the Proton acceptor of the active site. Residues 178 to 182 and 211 to 217 contribute to the NADP(+) site; these read YSAAK and GLRDRAS. N280 carries N-linked (GlcNAc...) asparagine glycosylation.

The protein belongs to the short-chain dehydrogenases/reductases (SDR) family.

Its subcellular location is the secreted. The catalysed reaction is cortisone + NADPH + H(+) = cortisol + NADP(+). In terms of biological role, unidirectional NADP(+)-dependent cortisol dehydrogenase (in vitro). The protein is Hydroxysteroid 11-beta-dehydrogenase 1-like protein (HSD11B1L) of Bos taurus (Bovine).